Reading from the N-terminus, the 230-residue chain is 5'-methylthioadenosine/S-adenosylhomocysteine nucleosidase (230 aa).

Catalysis depends on Glu-12, which acts as the Proton acceptor. Substrate is bound by residues Gly-78, Ile-153, and 174 to 175 (ME). The active-site Proton donor is Asp-198.

This sequence belongs to the PNP/UDP phosphorylase family. MtnN subfamily.

The catalysed reaction is S-adenosyl-L-homocysteine + H2O = S-(5-deoxy-D-ribos-5-yl)-L-homocysteine + adenine. The enzyme catalyses S-methyl-5'-thioadenosine + H2O = 5-(methylsulfanyl)-D-ribose + adenine. It carries out the reaction 5'-deoxyadenosine + H2O = 5-deoxy-D-ribose + adenine. Its pathway is amino-acid biosynthesis; L-methionine biosynthesis via salvage pathway; S-methyl-5-thio-alpha-D-ribose 1-phosphate from S-methyl-5'-thioadenosine (hydrolase route): step 1/2. Its function is as follows. Catalyzes the irreversible cleavage of the glycosidic bond in both 5'-methylthioadenosine (MTA) and S-adenosylhomocysteine (SAH/AdoHcy) to adenine and the corresponding thioribose, 5'-methylthioribose and S-ribosylhomocysteine, respectively. Also cleaves 5'-deoxyadenosine, a toxic by-product of radical S-adenosylmethionine (SAM) enzymes, into 5-deoxyribose and adenine. The protein is 5'-methylthioadenosine/S-adenosylhomocysteine nucleosidase of Shewanella frigidimarina (strain NCIMB 400).